The chain runs to 483 residues: Probable cytochrome P450 517A1 (483 aa).

Residues 1-21 (MEIINVFLFLIILFLVKDFVK) traverse the membrane as a helical segment. C429 provides a ligand contact to heme.

The protein belongs to the cytochrome P450 family. The cofactor is heme.

Its subcellular location is the membrane. The chain is Probable cytochrome P450 517A1 (cyp517A1) from Dictyostelium discoideum (Social amoeba).